Reading from the N-terminus, the 364-residue chain is MSQAVKDYYEILGVNRDATKEEIKKAYRKLVRIYHPDINPDPSAQEKFKEINEAYHVLIDDERRSEYDAILSRNDVGKFRDFLEYIQEFVESIIQGEKGKKRRPRKGQDIKMKLPLTLEEAGLGCEKEIIYSRWMDCPVCEGMGVKGEAETVVCHACNGEGRRVSGIFNFPRPCSVCKGKGFIVKNPCPTCYGRGRVSAQHKIKVHIPPGTEEGEVLKVPEKGHLGYFGGKPGDLYLKVVLKEHPIFKKVGKDLHMEKVVSFPLAVLGGTVKVPTLEGEEIDVFIQPGTECGATKVVKEKGYPYENGRGDLIIHIRIGVPKNLSKSERKLLEKLAESIKEEGEEVYREGGSLVEKLSSLFKKNA.

Positions 7–71 constitute a J domain; the sequence is DYYEILGVNR…ERRSEYDAIL (65 aa). The CR-type zinc finger occupies 124-200; it reads GCEKEIIYSR…CYGRGRVSAQ (77 aa). Positions 137, 140, 154, 157, 174, 177, 188, and 191 each coordinate Zn(2+). 4 CXXCXGXG motif repeats span residues 137–144, 154–161, 174–181, and 188–195; these read CPVCEGMG, CHACNGEG, CSVCKGKG, and CPTCYGRG.

It belongs to the DnaJ family. As to quaternary structure, homodimer. It depends on Zn(2+) as a cofactor.

The protein resides in the cytoplasm. Functionally, participates actively in the response to hyperosmotic and heat shock by preventing the aggregation of stress-denatured proteins and by disaggregating proteins, also in an autonomous, DnaK-independent fashion. Unfolded proteins bind initially to DnaJ; upon interaction with the DnaJ-bound protein, DnaK hydrolyzes its bound ATP, resulting in the formation of a stable complex. GrpE releases ADP from DnaK; ATP binding to DnaK triggers the release of the substrate protein, thus completing the reaction cycle. Several rounds of ATP-dependent interactions between DnaJ, DnaK and GrpE are required for fully efficient folding. Also involved, together with DnaK and GrpE, in the DNA replication of plasmids through activation of initiation proteins. The polypeptide is Chaperone protein DnaJ 1 (Aquifex aeolicus (strain VF5)).